Reading from the N-terminus, the 267-residue chain is MAEEVRQELSALAAIFCGPNEWEMLSCSETDGAVFRIHTTAEGLVGEDVPLELAFHLPVGYPLCLPGISVTSEHLTRAQCVTAKEKLLGEARKLVSEPMVHELVLWIQQNLRLVLSQPETVSSHEKCTLPESATGDDGPWMTLLRLDHMRARTKYVKAVEKWASELRLTGRLMFMGKLILILLQGDRSNIKEYLILQKTSKVDVDSSGKKCKEKMISVLSETKVQTEHKRFLAFEVKEYSTLEELQKEFGAAGLGELFSECVLGLVK.

The region spanning 7–114 (QELSALAAIF…LWIQQNLRLV (108 aa)) is the RWD domain. Interaction with UBE2I/UBC9 stretches follow at residues 13–15 (AAI) and 100–102 (VHE).

In terms of assembly, interacts with UBE2I/UBC9, NFKBIA, HIF1A and NCOA2.

It localises to the nucleus. The protein resides in the cytoplasm. Enhancer of SUMO conjugation. Via its interaction with UBE2I/UBC9, increases SUMO conjugation to proteins by promoting the binding of E1 and E2 enzymes, thioester linkage between SUMO and UBE2I/UBC9 and transfer of SUMO to specific target proteins which include HIF1A, PIAS, NFKBIA, NR3C1 and TOP1. Positively regulates the NF-kappa-B signaling pathway by enhancing the sumoylation of NF-kappa-B inhibitor alpha (NFKBIA), promoting its stabilization which consequently leads to an increased inhibition of NF-kappa-B transcriptional activity. Negatively regulates the hypoxia-inducible factor-1 alpha (HIF1A) signaling pathway by increasing the sumoylation of HIF1A, promoting its stabilization, transcriptional activity and the expression of its target gene VEGFA during hypoxia. Has no effect on ubiquitination. The polypeptide is RWD domain-containing protein 3 (Rwdd3) (Mus musculus (Mouse)).